Here is a 352-residue protein sequence, read N- to C-terminus: 3-isopropylmalate dehydrogenase (352 aa).

Arginine 96, arginine 106, arginine 134, and aspartate 220 together coordinate substrate. The Mg(2+) site is built by aspartate 220, aspartate 244, and aspartate 248. 277 to 289 (GSAPDIAGKNLAN) is an NAD(+) binding site.

The protein belongs to the isocitrate and isopropylmalate dehydrogenases family. LeuB type 1 subfamily. In terms of assembly, homodimer. Mg(2+) serves as cofactor. Requires Mn(2+) as cofactor.

It is found in the cytoplasm. It catalyses the reaction (2R,3S)-3-isopropylmalate + NAD(+) = 4-methyl-2-oxopentanoate + CO2 + NADH. The protein operates within amino-acid biosynthesis; L-leucine biosynthesis; L-leucine from 3-methyl-2-oxobutanoate: step 3/4. In terms of biological role, catalyzes the oxidation of 3-carboxy-2-hydroxy-4-methylpentanoate (3-isopropylmalate) to 3-carboxy-4-methyl-2-oxopentanoate. The product decarboxylates to 4-methyl-2 oxopentanoate. This Desulfitobacterium hafniense (strain Y51) protein is 3-isopropylmalate dehydrogenase.